We begin with the raw amino-acid sequence, 155 residues long: 6,7-dimethyl-8-ribityllumazine synthase (155 aa).

5-amino-6-(D-ribitylamino)uracil contacts are provided by residues Phe-23, 57-59, and 81-83; these read AFE and AVI. 86–87 lines the (2S)-2-hydroxy-3-oxobutyl phosphate pocket; sequence ST. His-89 (proton donor) is an active-site residue. Phe-114 is a 5-amino-6-(D-ribitylamino)uracil binding site. Position 128 (Arg-128) interacts with (2S)-2-hydroxy-3-oxobutyl phosphate.

The protein belongs to the DMRL synthase family.

It catalyses the reaction (2S)-2-hydroxy-3-oxobutyl phosphate + 5-amino-6-(D-ribitylamino)uracil = 6,7-dimethyl-8-(1-D-ribityl)lumazine + phosphate + 2 H2O + H(+). It participates in cofactor biosynthesis; riboflavin biosynthesis; riboflavin from 2-hydroxy-3-oxobutyl phosphate and 5-amino-6-(D-ribitylamino)uracil: step 1/2. Catalyzes the formation of 6,7-dimethyl-8-ribityllumazine by condensation of 5-amino-6-(D-ribitylamino)uracil with 3,4-dihydroxy-2-butanone 4-phosphate. This is the penultimate step in the biosynthesis of riboflavin. The chain is 6,7-dimethyl-8-ribityllumazine synthase from Pelobacter propionicus (strain DSM 2379 / NBRC 103807 / OttBd1).